Reading from the N-terminus, the 274-residue chain is PTS system sorbose-specific EIID component (274 aa).

The region spanning 4-273 (KKITQGDLVS…GIIGNALGFL (270 aa)) is the PTS EIID domain. The next 6 membrane-spanning stretches (helical) occupy residues 61 to 81 (LVFF…TAAM), 99 to 119 (IKVG…WGTL), 126 to 146 (LGAS…FFIF), 186 to 206 (ILGL…NVPL), 226 to 246 (ILDQ…MVRL), and 253 to 273 (PVWL…LGFL).

It localises to the cell inner membrane. The phosphoenolpyruvate-dependent sugar phosphotransferase system (PTS), a major carbohydrate active transport system, catalyzes the phosphorylation of incoming sugar substrates concomitant with their translocation across the cell membrane. The enzyme II SorABFM PTS system is involved in sorbose transport. This Klebsiella pneumoniae protein is PTS system sorbose-specific EIID component.